We begin with the raw amino-acid sequence, 288 residues long: MIPGSFDYHRPKSIADAVALLTKLGEDARPLAGGHSLIPIMKTRLATPEHLVDLRDIGDLVGIREEGTDVVIGAMTTQHALIGSDFLAAKLPIIRETSLLIADPQIRYMGTIGGNAANGDPGNDMPALMQCLGAAYELTGPEGARIVAARDYYQGAYFTAIEPGELLTAIRIPVPPTGHGYAYEKLKRKIGDYATAAAAVVLTMSGGKCVTASIGLTNVANTPLWAEEAGKVLVGTALDKPALDKAVALAEAITAPASDGRGPAEYRTKMAGVMLRRAVERAKARAKN.

One can recognise an FAD-binding PCMH-type domain in the interval 1-177 (MIPGSFDYHR…TAIRIPVPPT (177 aa)). FAD is bound by residues 32 to 36 (AGGHS) and 111 to 115 (TIGGN).

Dimer of heterotrimers. Each heterotrimer consists of a large, a medium and a small subunit. FAD is required as a cofactor.

The enzyme catalyses CO + a quinone + H2O = a quinol + CO2. Catalyzes the oxidation of carbon monoxide to carbon dioxide. The protein is Carbon monoxide dehydrogenase medium chain (coxM) of Afipia carboxidovorans (strain ATCC 49405 / DSM 1227 / KCTC 32145 / OM5) (Oligotropha carboxidovorans).